The primary structure comprises 142 residues: Large ribosomal subunit protein uL11 (142 aa).

Belongs to the universal ribosomal protein uL11 family. As to quaternary structure, part of the ribosomal stalk of the 50S ribosomal subunit. Interacts with L10 and the large rRNA to form the base of the stalk. L10 forms an elongated spine to which L12 dimers bind in a sequential fashion forming a multimeric L10(L12)X complex. One or more lysine residues are methylated.

Its function is as follows. Forms part of the ribosomal stalk which helps the ribosome interact with GTP-bound translation factors. In Vesicomyosocius okutanii subsp. Calyptogena okutanii (strain HA), this protein is Large ribosomal subunit protein uL11.